The following is a 128-amino-acid chain: Sulfurtransferase TusD (128 aa).

Cysteine 78 serves as the catalytic Cysteine persulfide intermediate.

Belongs to the DsrE/TusD family. As to quaternary structure, heterohexamer, formed by a dimer of trimers. The hexameric TusBCD complex contains 2 copies each of TusB, TusC and TusD. The TusBCD complex interacts with TusE.

It localises to the cytoplasm. Part of a sulfur-relay system required for 2-thiolation of 5-methylaminomethyl-2-thiouridine (mnm(5)s(2)U) at tRNA wobble positions. Accepts sulfur from TusA and transfers it in turn to TusE. The protein is Sulfurtransferase TusD of Shigella dysenteriae serotype 1 (strain Sd197).